We begin with the raw amino-acid sequence, 2223 residues long: Protein CHROMATIN REMODELING 4 (2223 aa).

The interval 39 to 69 (FDSPEYTSSSKPSKQRLKTDSTPERNSSKRK) is disordered. Basic and acidic residues predominate over residues 55 to 69 (LKTDSTPERNSSKRK). The PHD-type zinc-finger motif lies at 75–122 (YFECVICDLGGDLLCCDSCPRTYHTACLNPPLKRIPNGKWICPKCSPN). Composition is skewed to basic and acidic residues over residues 173–187 (EKGK…KSTG), 207–223 (SADD…DDLG), 248–285 (ESKL…ETGK), and 294–305 (ELNDGESLERCK). 3 disordered regions span residues 173 to 235 (EKGK…LPSD), 248 to 381 (ESKL…CLED), and 441 to 474 (AEDR…GTEG). The segment covering 306–315 (TDKKRAKKSL) has biased composition (basic residues). Residues 353 to 368 (ETPEKVKKLPKEERRA) are compositionally biased toward basic and acidic residues. A compositionally biased stretch (polar residues) spans 372 to 381 (TNKSSSCLED). The segment covering 441–466 (AEDRIDSSSETGKSSRDSRLRDKDMD) has biased composition (basic and acidic residues). 2 consecutive Chromo domains span residues 531–587 (EEIE…YKAK) and 601–663 (KQPQ…ERNS). The Helicase ATP-binding domain occupies 701–878 (RRCWHKSKNV…YNLLNFLQPS (178 aa)). 714-721 (DEMGLGKT) contacts ATP. The short motif at 829–832 (DEGH) is the DEAH box element. Positions 902–909 (LKKLVAPH) match the Nuclear localization signal motif. In terms of domain architecture, Helicase C-terminal spans 1008-1167 (LLHSMLKVLH…GSQKEFEDIL (160 aa)). Disordered stretches follow at residues 1268–1300 (EETA…DDVV), 1341–1380 (EAYA…LKEK), 1394–1463 (RRNS…ECLP), 1483–1511 (SESS…FNLP), 1760–1779 (LSSL…SSLF), and 2006–2223 (IPPF…LSDD). Residues 1363–1380 (EPELKKEYTPAGRALKEK) show a composition bias toward basic and acidic residues. Residues 1375–1402 (RALKEKFTKLRERQKNLIARRNSVEESL) are a coiled coil. Residues 1403–1414 (PSGNVDQVTEVA) are compositionally biased toward polar residues. Residues 2009–2019 (FVIPEPPPPAP) show a composition bias toward pro residues. Residues 2025–2035 (SLRKKRKRKLH) show a composition bias toward basic residues. Polar residues-rich tracts occupy residues 2039 to 2061 (QKTT…GNPQ), 2075 to 2096 (GETS…TEPL), and 2128 to 2148 (TGTT…TINQ). The segment covering 2157–2171 (DEKVESERTPLHSDE) has biased composition (basic and acidic residues). Residues 2189 to 2215 (IEAESQNTNAEEEAEAQEEDEESMKMV) are a coiled coil. Positions 2198–2210 (AEEEAEAQEEDEE) are enriched in acidic residues.

Belongs to the SNF2/RAD54 helicase family.

It is found in the nucleus. Functionally, chromatin-remodeling protein that binds DNA through histones and regulates gene transcription. May specifically recognize and bind trimethylated 'Lys-27' (H3K27me3) and non-methylated 'Lys-4' of histone H3. Probable chromatin remodeling factor. This Arabidopsis thaliana (Mouse-ear cress) protein is Protein CHROMATIN REMODELING 4.